The following is a 250-amino-acid chain: tRNA (guanine-N(1)-)-methyltransferase (250 aa).

Residues Gly-116 and 136–141 (IGDYVL) each bind S-adenosyl-L-methionine.

The protein belongs to the RNA methyltransferase TrmD family. In terms of assembly, homodimer.

Its subcellular location is the cytoplasm. The catalysed reaction is guanosine(37) in tRNA + S-adenosyl-L-methionine = N(1)-methylguanosine(37) in tRNA + S-adenosyl-L-homocysteine + H(+). Specifically methylates guanosine-37 in various tRNAs. The polypeptide is tRNA (guanine-N(1)-)-methyltransferase (Pseudomonas putida (strain GB-1)).